Consider the following 260-residue polypeptide: 14-3-3-like protein C (260 aa).

This sequence belongs to the 14-3-3 family.

The chain is 14-3-3-like protein C from Nicotiana tabacum (Common tobacco).